A 478-amino-acid polypeptide reads, in one-letter code: Uronate isomerase (478 aa).

Belongs to the metallo-dependent hydrolases superfamily. Uronate isomerase family.

It carries out the reaction D-glucuronate = D-fructuronate. It catalyses the reaction aldehydo-D-galacturonate = keto-D-tagaturonate. It functions in the pathway carbohydrate metabolism; pentose and glucuronate interconversion. This is Uronate isomerase from Bacillus pumilus (strain SAFR-032).